The following is a 597-amino-acid chain: FERM domain-containing protein 3 (597 aa).

In terms of domain architecture, FERM spans 32 to 312 (MRCTIRLLDD…ENQAFYKYAK (281 aa)). Residues 409-435 (SAPLISSSPVKAAQEYEDPPSEEEDKI) are disordered. Positions 423-432 (EYEDPPSEEE) are enriched in acidic residues. A helical transmembrane segment spans residues 531–551 (LLVVGLGLLLFVFPLLLLLLE).

Its subcellular location is the membrane. Its function is as follows. Putative tumor suppressor gene that may be implicated in the origin and progression of lung cancer. This chain is FERM domain-containing protein 3 (FRMD3), found in Pongo abelii (Sumatran orangutan).